A 403-amino-acid polypeptide reads, in one-letter code: UPF0229 protein CKR_0568 (403 aa).

A disordered region spans residues 71-109 (SSGVGSGDGSQKKGDRIGKAIKDRDGKGNQGAGNQEGED). Basic and acidic residues predominate over residues 80–97 (SQKKGDRIGKAIKDRDGK).

It belongs to the UPF0229 family.

The protein is UPF0229 protein CKR_0568 of Clostridium kluyveri (strain NBRC 12016).